A 931-amino-acid chain; its full sequence is Neuropilin-2 (931 aa).

An N-terminal signal peptide occupies residues 1 to 20 (MDMFPLTWVFLALYFSGHEV). Over 21 to 864 (RSQQDPPCGG…EKSWLYTLDP (844 aa)) the chain is Extracellular. Intrachain disulfides connect cysteine 28–cysteine 55, cysteine 83–cysteine 105, and cysteine 149–cysteine 175. CUB domains lie at 28–142 (CGGR…YEIF) and 149–267 (CSKN…YYLI). N-linked (GlcNAc...) asparagine glycosylation is found at asparagine 152 and asparagine 157. The Ca(2+) site is built by glutamate 197, aspartate 211, and aspartate 252. A disulfide bond links cysteine 208 and cysteine 230. 2 disulfides stabilise this stretch: cysteine 277–cysteine 427 and cysteine 434–cysteine 592. 2 F5/8 type C domains span residues 277-427 (CNVP…LFGC) and 434-592 (CSNM…VLGC). A compositionally biased stretch (polar residues) spans 298-310 (TFSDGRWTPQQSR). Residues 298 to 317 (TFSDGRWTPQQSRLHGDDNG) are disordered. The segment at 601–621 (VETLGPTVKSEETTTPYPMDE) is disordered. N-linked (GlcNAc...) asparagine glycosylation is present at asparagine 629. Residues 642 to 802 (SGFNCNFDFP…TDVPLENCME (161 aa)) form the MAM domain. Positions 819–854 (THGGEGYEDEIDDEYEGDWSNSSSSTSGAGDPSSGK) are disordered. The segment covering 824–835 (GYEDEIDDEYEG) has biased composition (acidic residues). The segment covering 836-851 (DWSNSSSSTSGAGDPS) has biased composition (low complexity). Residue asparagine 839 is glycosylated (N-linked (GlcNAc...) asparagine). A helical membrane pass occupies residues 865 to 889 (ILITIIAMSSLGVLLGATCAGLLLY). Residues 890–931 (CTCSYSGLSSRSCTTLENYNFELYDGLKHKVKINHQKCCSEA) are Cytoplasmic-facing.

It belongs to the neuropilin family. Heterodimer with NRP1. Binds PLXNB1. Expressed in developing CNS, PNS and in some nonneural tissues including limb buds, developing bones, muscles, intestinal epithelium, kidney, lung and submandibular gland.

Its subcellular location is the membrane. Its function is as follows. High affinity receptor for semaphorins 3C, 3F, VEGF-165 and VEGF-145 isoforms of VEGF, and the PLGF-2 isoform of PGF. The sequence is that of Neuropilin-2 (Nrp2) from Mus musculus (Mouse).